Reading from the N-terminus, the 342-residue chain is MTPDPASALQHRKRRHIDVCLTDPVDYQTLTTGFERYQLPYNALTQTDLHSVDLGTEFMGSRLRAPVLIGAMTGGAALSGIINRNLAEAAQQLGVGMMLGSQRVMIDDAVAAESFDVRGVAPDVLVIGNIGLAQLQPSMVPALAAALDRVGANGLAVHTNPLQEAMQHNGDTDFSGSMSRLREVVDSLGYPVMLKEVGHGIGASAAAQLVDCPVAAVDVAGAGGTSWARIEQFVRYGEVRYPALAEWGIPTAQALTEVRGILPDVPLVASGGIRTGMDAAKALAMGAEVVAIARPLLAPAVESVGAVVDWLQRFIDELLVCLHGSGAANLSALRERGVTELP.

12-13 (RK) provides a ligand contact to substrate. Residues 71–73 (AMT), Ser101, and Asn129 each bind FMN. Substrate is bound at residue 101–103 (SQR). Residue Gln163 participates in substrate binding. Glu164 serves as a coordination point for Mg(2+). FMN-binding positions include Lys195, Thr225, 272–274 (GIR), and 293–294 (AR).

The protein belongs to the IPP isomerase type 2 family. In terms of assembly, homooctamer. Dimer of tetramers. FMN is required as a cofactor. It depends on NADPH as a cofactor. Mg(2+) serves as cofactor.

Its subcellular location is the cytoplasm. It carries out the reaction isopentenyl diphosphate = dimethylallyl diphosphate. In terms of biological role, involved in the biosynthesis of isoprenoids. Catalyzes the 1,3-allylic rearrangement of the homoallylic substrate isopentenyl (IPP) to its allylic isomer, dimethylallyl diphosphate (DMAPP). The polypeptide is Isopentenyl-diphosphate delta-isomerase (Mycolicibacterium gilvum (strain PYR-GCK) (Mycobacterium gilvum (strain PYR-GCK))).